Here is a 184-residue protein sequence, read N- to C-terminus: Gremlin-1 (184 aa).

The first 24 residues, 1–24, serve as a signal peptide directing secretion; it reads MVRTLYAIGAVFLLTGFLLPTAEG. Residues 24–77 are disordered; it reads GRKRNRGSQGAIPPPDKDQPNDSEQMQTQQQSGSRHRERGKGTSMPAEEVLESS. An N-linked (GlcNAc...) asparagine glycan is attached at asparagine 44. The span at 45–56 shows a compositional bias: polar residues; the sequence is DSEQMQTQQQSG. Intrachain disulfides connect cysteine 94–cysteine 144, cysteine 108–cysteine 158, cysteine 118–cysteine 176, and cysteine 122–cysteine 178. The region spanning 94–184 is the CTCK domain; the sequence is CKTQPLKQTI…ECRCISIDLD (91 aa).

This sequence belongs to the DAN family.

It is found in the secreted. Functionally, cytokine that may play a role in the development of the medial pallium and during optic nerve and pecten development by modulating BMP signaling. The sequence is that of Gremlin-1 (GREM1) from Gallus gallus (Chicken).